A 187-amino-acid chain; its full sequence is Ribosome-recycling factor (187 aa).

Belongs to the RRF family.

Its subcellular location is the cytoplasm. Its function is as follows. Responsible for the release of ribosomes from messenger RNA at the termination of protein biosynthesis. May increase the efficiency of translation by recycling ribosomes from one round of translation to another. This chain is Ribosome-recycling factor, found in Paracoccus zeaxanthinifaciens.